Consider the following 209-residue polypeptide: MVDFYYLPGSSPCRSVIMTAKAVGVELNKKLLNLQAGEHLKPEFLKINPQHTIPTLVDNGFALWESRAIQVYLVEKYGKTDSLYPKCPKKRAVINQRLYFDMGTLYQSFANYYYPQVFAKAPADPEAFKKIEAAFEFLNTFLEGQDYAAGDSLTVADIALVATVSTFEVAKFEISKYANVNRWYENAKKVTPGWEENWAGCLEFKKYFE.

A GST N-terminal domain is found at 1–81 (MVDFYYLPGS…YLVEKYGKTD (81 aa)). Residues Ser10, 51–53 (HTI), and 65–67 (ESR) contribute to the glutathione site. The GST C-terminal domain occupies 87-208 (CPKKRAVINQ…AGCLEFKKYF (122 aa)).

The protein belongs to the GST superfamily. Delta family. In terms of assembly, homodimer.

It carries out the reaction RX + glutathione = an S-substituted glutathione + a halide anion + H(+). The catalysed reaction is 1,1,1-trichloro-2,2-bis(4-chlorophenyl)ethane = 1,1-dichloro-2,2-bis(4-chlorophenyl)ethylene + chloride + H(+). Functionally, conjugation of reduced glutathione to a wide number of exogenous and endogenous hydrophobic electrophiles. Has DDT dehydrochlorinase activity. May be involved in detoxification. The sequence is that of Glutathione S-transferase D1 from Drosophila melanogaster (Fruit fly).